The following is a 677-amino-acid chain: Pentatricopeptide repeat-containing protein At5g39350 (677 aa).

PPR repeat units lie at residues S48–S78, S79–C113, D116–S146, D151–R181, D182–L216, D217–D251, K252–R282, D283–P317, N318–S352, D353–Y383, H384–P418, N419–S453, S454–K488, D489–P523, N524–H554, and R560–E590. The interval V595–R670 is type E motif.

The protein belongs to the PPR family. PCMP-E subfamily.

This is Pentatricopeptide repeat-containing protein At5g39350 (PCMP-E16) from Arabidopsis thaliana (Mouse-ear cress).